The following is a 258-amino-acid chain: Probable enoyl-CoA hydratase (258 aa).

This sequence belongs to the enoyl-CoA hydratase/isomerase family.

It catalyses the reaction a (3S)-3-hydroxyacyl-CoA = a (2E)-enoyl-CoA + H2O. The enzyme catalyses a 4-saturated-(3S)-3-hydroxyacyl-CoA = a (3E)-enoyl-CoA + H2O. Its pathway is lipid metabolism; fatty acid beta-oxidation. In terms of biological role, involved in the degradation of long-chain fatty acids. This chain is Probable enoyl-CoA hydratase (fadB), found in Bacillus subtilis (strain 168).